The primary structure comprises 292 residues: MPELPEVETVRRGLEPVMVGARILSVDQRRPDLRFPFPDRFPERLAGRRILALGRRAKYLLADLDDGDVLIMHLGMSGSFRVEQAGPAKTLSPRGAPPKNAAHDHVVFTLTSGGRIVYNDPRRFGFMQIAARADLAAHPLFRSLGVEPLGNELSGAALARLFAGKTTSLKAALLDQSLVAGLGNIYVCEALHRAGLSPLRQAGSLTKKSGRPTERANRLADTIREVLEEAVAAGGSSLRDHRQTNGALGYFQHNFRVYDRALHPCPTPGCKGEISRITQGGRSSFFCSMCQK.

P2 (schiff-base intermediate with DNA) is an active-site residue. E3 acts as the Proton donor in catalysis. K58 (proton donor; for beta-elimination activity) is an active-site residue. Residues H103, R122, and K165 each coordinate DNA. The FPG-type zinc finger occupies 256-292 (RVYDRALHPCPTPGCKGEISRITQGGRSSFFCSMCQK). R282 functions as the Proton donor; for delta-elimination activity in the catalytic mechanism.

This sequence belongs to the FPG family. Monomer. Zn(2+) is required as a cofactor.

It catalyses the reaction Hydrolysis of DNA containing ring-opened 7-methylguanine residues, releasing 2,6-diamino-4-hydroxy-5-(N-methyl)formamidopyrimidine.. The catalysed reaction is 2'-deoxyribonucleotide-(2'-deoxyribose 5'-phosphate)-2'-deoxyribonucleotide-DNA = a 3'-end 2'-deoxyribonucleotide-(2,3-dehydro-2,3-deoxyribose 5'-phosphate)-DNA + a 5'-end 5'-phospho-2'-deoxyribonucleoside-DNA + H(+). In terms of biological role, involved in base excision repair of DNA damaged by oxidation or by mutagenic agents. Acts as a DNA glycosylase that recognizes and removes damaged bases. Has a preference for oxidized purines, such as 7,8-dihydro-8-oxoguanine (8-oxoG). Has AP (apurinic/apyrimidinic) lyase activity and introduces nicks in the DNA strand. Cleaves the DNA backbone by beta-delta elimination to generate a single-strand break at the site of the removed base with both 3'- and 5'-phosphates. The protein is Formamidopyrimidine-DNA glycosylase of Methylocella silvestris (strain DSM 15510 / CIP 108128 / LMG 27833 / NCIMB 13906 / BL2).